Reading from the N-terminus, the 211-residue chain is Large ribosomal subunit protein bL25 (211 aa).

This sequence belongs to the bacterial ribosomal protein bL25 family. CTC subfamily. In terms of assembly, part of the 50S ribosomal subunit; part of the 5S rRNA/L5/L18/L25 subcomplex. Contacts the 5S rRNA. Binds to the 5S rRNA independently of L5 and L18.

Functionally, this is one of the proteins that binds to the 5S RNA in the ribosome where it forms part of the central protuberance. In Xanthomonas axonopodis pv. citri (strain 306), this protein is Large ribosomal subunit protein bL25.